Reading from the N-terminus, the 320-residue chain is Beta-carotene 4-ketolase 3 (320 aa).

It carries out the reaction echinenone + 2 AH2 + 2 O2 = canthaxanthin + 2 A + 3 H2O. The catalysed reaction is all-trans-beta-carotene + 2 AH2 + 2 O2 = echinenone + 2 A + 3 H2O. Its pathway is carotenoid biosynthesis. In terms of biological role, involved in the biosynthesis of ketocarotenoids which are powerful anti-oxidative molecules. Catalyzes the conversion of beta-carotene to canthaxanthin via echinenone. This chain is Beta-carotene 4-ketolase 3, found in Haematococcus lacustris (Green alga).